The sequence spans 67 residues: ATP synthase protein 8 (67 aa).

A helical transmembrane segment spans residues 8–24; the sequence is TWFTTVLSTTITLFILM. Lys54 carries the N6-acetyllysine; alternate modification. An N6-succinyllysine; alternate modification is found at Lys54. At Lys57 the chain carries N6-acetyllysine.

It belongs to the ATPase protein 8 family. As to quaternary structure, F-type ATPases have 2 components, CF(1) - the catalytic core - and CF(0) - the membrane proton channel. Component of an ATP synthase complex composed of ATP5PB, ATP5MC1, ATP5F1E, ATP5PD, ATP5ME, ATP5PF, ATP5MF, MT-ATP6, MT-ATP8, ATP5F1A, ATP5F1B, ATP5F1D, ATP5F1C, ATP5PO, ATP5MG, ATP5MK and ATP5MJ. Interacts with PRICKLE3.

Its subcellular location is the mitochondrion membrane. Functionally, mitochondrial membrane ATP synthase (F(1)F(0) ATP synthase or Complex V) produces ATP from ADP in the presence of a proton gradient across the membrane which is generated by electron transport complexes of the respiratory chain. F-type ATPases consist of two structural domains, F(1) - containing the extramembraneous catalytic core and F(0) - containing the membrane proton channel, linked together by a central stalk and a peripheral stalk. During catalysis, ATP synthesis in the catalytic domain of F(1) is coupled via a rotary mechanism of the central stalk subunits to proton translocation. Part of the complex F(0) domain. Minor subunit located with subunit a in the membrane. The sequence is that of ATP synthase protein 8 (MT-ATP8) from Microtus pennsylvanicus (Meadow vole).